Here is a 366-residue protein sequence, read N- to C-terminus: tRNA-specific 2-thiouridylase MnmA (366 aa).

ATP contacts are provided by residues 6 to 13 and leucine 32; that span reads AMSGGVDS. Cysteine 101 serves as the catalytic Nucleophile. Cysteine 101 and cysteine 198 form a disulfide bridge. Residue glycine 125 participates in ATP binding. The interaction with tRNA stretch occupies residues 148 to 150; sequence KDQ. Cysteine 198 (cysteine persulfide intermediate) is an active-site residue.

The protein belongs to the MnmA/TRMU family.

It is found in the cytoplasm. It catalyses the reaction S-sulfanyl-L-cysteinyl-[protein] + uridine(34) in tRNA + AH2 + ATP = 2-thiouridine(34) in tRNA + L-cysteinyl-[protein] + A + AMP + diphosphate + H(+). Its function is as follows. Catalyzes the 2-thiolation of uridine at the wobble position (U34) of tRNA, leading to the formation of s(2)U34. In Nocardioides sp. (strain ATCC BAA-499 / JS614), this protein is tRNA-specific 2-thiouridylase MnmA.